A 612-amino-acid chain; its full sequence is Arginine--tRNA ligase (612 aa).

The 'HIGH' region motif lies at 152–162 (PNIAKEMHVGH).

It belongs to the class-I aminoacyl-tRNA synthetase family. In terms of assembly, monomer.

The protein localises to the cytoplasm. It carries out the reaction tRNA(Arg) + L-arginine + ATP = L-arginyl-tRNA(Arg) + AMP + diphosphate. The chain is Arginine--tRNA ligase from Prochlorococcus marinus (strain MIT 9313).